The following is a 94-amino-acid chain: Integration host factor subunit beta (94 aa).

The protein belongs to the bacterial histone-like protein family. Heterodimer of an alpha and a beta chain.

This protein is one of the two subunits of integration host factor, a specific DNA-binding protein that functions in genetic recombination as well as in transcriptional and translational control. In Photorhabdus laumondii subsp. laumondii (strain DSM 15139 / CIP 105565 / TT01) (Photorhabdus luminescens subsp. laumondii), this protein is Integration host factor subunit beta.